Reading from the N-terminus, the 394-residue chain is Penicillopepsin-2 (394 aa).

The N-terminal stretch at 1–20 (MVVFSKITVVLAGLATVASA) is a signal peptide. The propeptide at 21–71 (VPTGTSRKSTFTVNQKARPVAQAKAINLPGMYASALSKYGAAVPASVKAAA) is activation peptide. Residues 87–391 (YLTPVNVGGT…DANGPRLGFA (305 aa)) enclose the Peptidase A1 domain. The active site involves Asp-103. Asn-132 carries N-linked (GlcNAc...) asparagine glycosylation. Asp-283 is an active-site residue. The cysteines at positions 319 and 354 are disulfide-linked.

Belongs to the peptidase A1 family. In terms of assembly, monomer.

The protein resides in the secreted. The catalysed reaction is Hydrolysis of proteins with broad specificity similar to that of pepsin A, preferring hydrophobic residues at P1 and P1', but also cleaving 20-Gly-|-Glu-21 in the B chain of insulin. Clots milk, and activates trypsinogen.. Functionally, secreted aspartic endopeptidase that allows assimilation of proteinaceous substrates. The scissile peptide bond is attacked by a nucleophilic water molecule activated by two aspartic residues in the active site. Shows a broad primary substrate specificity. Favors hydrophobic residues at the P1 and P1' positions, but can also activate trypsinogen and hydrolyze the B chain of insulin between positions 'Gly-20' and 'Glu-21'. In Penicillium janthinellum (Penicillium vitale), this protein is Penicillopepsin-2.